The primary structure comprises 435 residues: MQIVVVGLSHRTAPVEVREKLSIPDQAISESLKSLRAYSDILEVSILSTCNRLEIYGLVKDKNIGISSIKEFLSDYSQVNCEVLTPHLFDFRQEEAVLHLMKVSAGLDSLVLGEGQILSQVKKMMRLGQENQSTGPILNRLLSQSVSAGKKVRAETNLGTGAVSISSAAVELAQLKIGQDNGIDGLVSLKGEKVLVVGAGRMSRLLITHLKSKGCNKLTLLNRNIDRAINLSGDFPDIEIICKGLDELDKSITLSSLVFTSTASEKPFIDLERIKNISLNNKLKFIDIGVPRNISNDVKQHDLIEAFDVDDLEEVVSRNQEFRQKIAKEAESLVKEERIIFLEWWASLEAVPVINKLRSDLELIRKEELQKALSRMGPDFSARERKVVEALTKGIINKILHTPVTKLRSPQSREERQASLKIVEKLFSLMDDEQK.

Residues 49 to 52 (TCNR), S109, 114 to 116 (EGQ), and Q120 contribute to the substrate site. The active-site Nucleophile is C50. 198–203 (GAGRMS) is a binding site for NADP(+).

The protein belongs to the glutamyl-tRNA reductase family. Homodimer.

It carries out the reaction (S)-4-amino-5-oxopentanoate + tRNA(Glu) + NADP(+) = L-glutamyl-tRNA(Glu) + NADPH + H(+). It participates in porphyrin-containing compound metabolism; protoporphyrin-IX biosynthesis; 5-aminolevulinate from L-glutamyl-tRNA(Glu): step 1/2. It functions in the pathway porphyrin-containing compound metabolism; chlorophyll biosynthesis. Functionally, catalyzes the NADPH-dependent reduction of glutamyl-tRNA(Glu) to glutamate 1-semialdehyde (GSA). The sequence is that of Glutamyl-tRNA reductase from Prochlorococcus marinus (strain MIT 9515).